Reading from the N-terminus, the 523-residue chain is Vanin-like protein 3 (523 aa).

An N-terminal signal peptide occupies residues Met1 to Thr19. The 270-residue stretch at Tyr29–Leu298 folds into the CN hydrolase domain. Asn64 carries an N-linked (GlcNAc...) asparagine glycan. The active-site Proton acceptor is the Glu74. The Proton donor role is filled by Lys167. Residues Asn177 and Asn192 are each glycosylated (N-linked (GlcNAc...) asparagine). Cys200 acts as the Nucleophile in catalysis. N-linked (GlcNAc...) asparagine glycans are attached at residues Asn330 and Asn468. A lipid anchor (GPI-anchor amidated asparagine) is attached at Asn498. Residues Gly499–Glu523 constitute a propeptide, removed in mature form.

It belongs to the carbon-nitrogen hydrolase superfamily. BTD/VNN family. Expressed in third instar larvae.

The protein localises to the cell membrane. The sequence is that of Vanin-like protein 3 from Drosophila melanogaster (Fruit fly).